A 368-amino-acid chain; its full sequence is Xaa-Pro dipeptidase (368 aa).

D223, D234, H298, E327, and E341 together coordinate Mn(2+).

It belongs to the peptidase M24B family. Requires Mn(2+) as cofactor.

The protein localises to the cytoplasm. It catalyses the reaction Xaa-L-Pro dipeptide + H2O = an L-alpha-amino acid + L-proline. In Lactobacillus delbrueckii subsp. lactis, this protein is Xaa-Pro dipeptidase (pepQ).